The following is a 171-amino-acid chain: S-ribosylhomocysteine lyase (171 aa).

Residues His-54, His-58, and Cys-128 each contribute to the Fe cation site.

It belongs to the LuxS family. As to quaternary structure, homodimer. The cofactor is Fe cation.

It carries out the reaction S-(5-deoxy-D-ribos-5-yl)-L-homocysteine = (S)-4,5-dihydroxypentane-2,3-dione + L-homocysteine. Functionally, involved in the synthesis of autoinducer 2 (AI-2) which is secreted by bacteria and is used to communicate both the cell density and the metabolic potential of the environment. The regulation of gene expression in response to changes in cell density is called quorum sensing. Catalyzes the transformation of S-ribosylhomocysteine (RHC) to homocysteine (HC) and 4,5-dihydroxy-2,3-pentadione (DPD). The sequence is that of S-ribosylhomocysteine lyase from Aliarcobacter butzleri (strain RM4018) (Arcobacter butzleri).